A 95-amino-acid polypeptide reads, in one-letter code: MSLSENQVSQIAHLACLSLNEAQLKDNTQNLNTITSLFEQLANIEIDGVEPMLHPLHMFQRLREDVVSEKEQLALFQSIAPKVRNGYYLVPTVIK.

Belongs to the GatC family. As to quaternary structure, heterotrimer of A, B and C subunits.

It catalyses the reaction L-glutamyl-tRNA(Gln) + L-glutamine + ATP + H2O = L-glutaminyl-tRNA(Gln) + L-glutamate + ADP + phosphate + H(+). The enzyme catalyses L-aspartyl-tRNA(Asn) + L-glutamine + ATP + H2O = L-asparaginyl-tRNA(Asn) + L-glutamate + ADP + phosphate + 2 H(+). In terms of biological role, allows the formation of correctly charged Asn-tRNA(Asn) or Gln-tRNA(Gln) through the transamidation of misacylated Asp-tRNA(Asn) or Glu-tRNA(Gln) in organisms which lack either or both of asparaginyl-tRNA or glutaminyl-tRNA synthetases. The reaction takes place in the presence of glutamine and ATP through an activated phospho-Asp-tRNA(Asn) or phospho-Glu-tRNA(Gln). This is Aspartyl/glutamyl-tRNA(Asn/Gln) amidotransferase subunit C from Vesicomyosocius okutanii subsp. Calyptogena okutanii (strain HA).